The primary structure comprises 423 residues: Acaloleptin A (423 aa).

An N-terminal signal peptide occupies residues 1-17; that stretch reads MITKISLILFAVLLVSG. A propeptide spanning residues 18 to 26 is cleaved from the precursor; that stretch reads LEEEERWKR. 4 disordered regions span residues 28 to 58, 108 to 128, 180 to 203, and 355 to 385; these read LQPGAPNVNNNDQPWQVSPHISRDDSGNTKT, INNKDQPWQVSPHISRDDNGN, NVNNKDQPWQVSPHISRDDSGNTR, and SDDEDEEEEEDQPWQLNPNIARGDDGNTRAD. Over residues 34 to 43 the composition is skewed to polar residues; sequence NVNNNDQPWQ. Polar residues predominate over residues 180 to 189; it reads NVNNKDQPWQ. Acidic residues predominate over residues 357–366; it reads DEDEEEEEDQ. A compositionally biased stretch (basic and acidic residues) spans 376 to 385; it reads RGDDGNTRAD.

This sequence belongs to the coleoptericin family. Hemolymph (at protein level). Larval fat body.

It is found in the secreted. Functionally, acaloleptins A1-A4 show antibacterial activity against Gram-negative bacteria but not against Gram-positive bacteria. Acaloleptin A5 shows antibacterial activity against Gram-positive bacteria but not against Gram-negative bacteria, and may also have antifungal activity. This Acalolepta luxuriosa (Udo longhorn beetle) protein is Acaloleptin A.